A 236-amino-acid chain; its full sequence is Mitochondrial-abundant heat soluble protein (236 aa).

The transit peptide at 1 to 73 directs the protein to the mitochondrion; it reads MSRYLLRDVQ…AARAGVVLRG (73 aa). 2 disordered regions span residues 102–135 and 165–209; these read RIHS…NEAA and RSNG…EIVA. Polar residues-rich tracts occupy residues 105–126 and 192–202; these read SQSS…NSPQ and APDSSKNTKSV. Positions 126-143 match the MAHS motif motif; sequence QPEGKANEAAERAKQFMN.

Its subcellular location is the mitochondrion. Functionally, mitochondrial heat soluble protein acting as a molecular shield in water-deficient condition. The polypeptide is Mitochondrial-abundant heat soluble protein (Ramazzottius varieornatus (Water bear)).